The sequence spans 307 residues: Mitochondrial brown fat uncoupling protein 1 (307 aa).

Over 1 to 10 (MVSSTTSEVQ) the chain is Mitochondrial intermembrane. The chain crosses the membrane as a helical span at residues 11–32 (PTMGVKIFSAGVSACLADIITF). Solcar repeat units follow at residues 11–102 (PTMG…VQEY), 111–201 (ASLG…MKGA), and 210–295 (DDVP…LKKE). Residues 33-73 (PLDTAKVRLQIQGEGQASSTIRYKGVLGTITTLAKTEGLPK) are Mitochondrial matrix-facing. Position 56 (lysine 56) interacts with fatty acid 16:0. A helical membrane pass occupies residues 74–96 (LYSGLPAGIQRQISFASLRIGLY). Topologically, residues 97-116 (DTVQEYFSSGRETPASLGSK) are mitochondrial intermembrane. A helical membrane pass occupies residues 117-133 (ISAGLMTGGVAVFIGQP). Residues 134-178 (TEVVKVRMQAQSHLHGIKPRYTGTYNAYRVIATTESLSTLWKGTT) are Mitochondrial matrix-facing. Residues 179 to 195 (PNLMRNVIINCTELVTY) traverse the membrane as a helical segment. The Mitochondrial intermembrane segment spans residues 196–212 (DLMKGALVNHHILADDV). Residues 213-232 (PCHLLSALVAGFCTTLLASP) form a helical membrane-spanning segment. Over 233–266 (VDVVKTRFINSLPGQYPSVPSCAMTMYTKEGPAA) the chain is Mitochondrial matrix. Residue cysteine 254 is modified to Cysteine sulfenic acid (-SOH). A helical transmembrane segment spans residues 267 to 289 (FFKGFAPSFLRLGSWNVIMFVCF). Lysine 269 contacts fatty acid 16:0. The Mitochondrial intermembrane segment spans residues 290-307 (EQLKKELMKSRQTVDCTT).

This sequence belongs to the mitochondrial carrier (TC 2.A.29) family. As to quaternary structure, most probably functions as a monomer. Binds one purine nucleotide per monomer. However, has also been suggested to function as a homodimer or a homotetramer. Tightly associates with cardiolipin in the mitochondrion inner membrane; may stabilize and regulate its activity. May undergo ubiquitin-mediated proteasomal degradation. In terms of processing, may undergo sulfenylation upon cold exposure. May increase the sensitivity of UCP1 thermogenic function to the activation by noradrenaline probably through structural effects. Brown adipose tissue.

The protein localises to the mitochondrion inner membrane. It carries out the reaction H(+)(in) = H(+)(out). Its activity is regulated as follows. Has no constitutive proton transporter activity and has to be activated by long-chain fatty acids/LCFAs. Inhibited by purine nucleotides. Both purine nucleotides and LCFAs bind the cytosolic side of the transporter and directly compete to activate or inhibit it. Activated by noradrenaline and reactive oxygen species. Despite lacking canonical translational encoding for selenocysteine, a small pool of the protein has been observed to selectively incorporate selenocysteine at 'Cys-254'. Selenocysteine-modified protein is highly sensitive to redox modification and may constitute a pool of protein highly sensitive to activation by elevated levels of reactive oxygen species (ROS). Its function is as follows. Mitochondrial protein responsible for thermogenic respiration, a specialized capacity of brown adipose tissue and beige fat that participates in non-shivering adaptive thermogenesis to temperature and diet variations and more generally to the regulation of energy balance. Functions as a long-chain fatty acid/LCFA and proton symporter, simultaneously transporting one LCFA and one proton through the inner mitochondrial membrane. However, LCFAs remaining associated with the transporter via their hydrophobic tails, it results in an apparent transport of protons activated by LCFAs. Thereby, dissipates the mitochondrial proton gradient and converts the energy of substrate oxydation into heat instead of ATP. Regulates the production of reactive oxygen species/ROS by mitochondria. The polypeptide is Mitochondrial brown fat uncoupling protein 1 (Rattus norvegicus (Rat)).